The sequence spans 68 residues: Protein RH1 (68 aa).

The polypeptide is Protein RH1 (Pantherophis guttatus (Corn snake)).